Consider the following 179-residue polypeptide: Large ribosomal subunit protein uL5 (179 aa).

The protein belongs to the universal ribosomal protein uL5 family. As to quaternary structure, part of the 50S ribosomal subunit; part of the 5S rRNA/L5/L18/L25 subcomplex. Contacts the 5S rRNA and the P site tRNA. Forms a bridge to the 30S subunit in the 70S ribosome.

Its function is as follows. This is one of the proteins that bind and probably mediate the attachment of the 5S RNA into the large ribosomal subunit, where it forms part of the central protuberance. In the 70S ribosome it contacts protein S13 of the 30S subunit (bridge B1b), connecting the 2 subunits; this bridge is implicated in subunit movement. Contacts the P site tRNA; the 5S rRNA and some of its associated proteins might help stabilize positioning of ribosome-bound tRNAs. This is Large ribosomal subunit protein uL5 from Exiguobacterium sp. (strain ATCC BAA-1283 / AT1b).